Reading from the N-terminus, the 594-residue chain is Gamma-terpinene synthase, chloroplastic (594 aa).

The transit peptide at 1-44 (MATLSMQVSILSKEVKNVNNIGMRASKPMVARRVSTTRLRPICS) directs the protein to the chloroplast. Positions 347 and 351 each coordinate Mn(2+). A DDXXD motif motif is present at residues 347–351 (DDVYD). Homodimerization regions lie at residues 353 to 359 (YGTLDEL) and 425 to 462 (EAKW…FTLP). Mn(2+) is bound by residues aspartate 491 and glutamate 499.

It belongs to the terpene synthase family. In terms of assembly, homodimer. It depends on Mn(2+) as a cofactor. Requires Mg(2+) as cofactor. As to expression, expressed in peltate glandular trichomes.

The protein resides in the plastid. It localises to the chloroplast. The catalysed reaction is (2E)-geranyl diphosphate = gamma-terpinene + diphosphate. The enzyme catalyses (2E)-geranyl diphosphate = alpha-terpinene + diphosphate. The protein operates within secondary metabolite biosynthesis; terpenoid biosynthesis. In terms of biological role, involved in the biosynthesis of phenolic monoterpenes natural products thymol and carvacrol which have a broad range of biological activities acting as antimicrobial compounds, insecticides, antioxidants and pharmaceutical agents. Monoterpene synthase which catalyzes the conversion of geranyl diphosphate (GPP) to gamma-terpinene and the minor products alpha-thujene, alpha-terpinene, myrcene, sabinene, (+)-R-limonene, alpha-pinene and alpha-phellandrene. The protein is Gamma-terpinene synthase, chloroplastic of Origanum vulgare (Wild marjoram).